A 107-amino-acid chain; its full sequence is Glutaconyl-CoA decarboxylase subunit delta (107 aa).

The chain crosses the membrane as a helical span at residues 10–32; it reads MINMTIVFGVLIVLGILMVLIHA. The tract at residues 37–60 is disordered; that stretch reads KKVQGKKKPVVAKPAPSAAASKRQ. The segment covering 47–57 has biased composition (low complexity); it reads VAKPAPSAAAS.

Belongs to the OadG family. Heterooctamer consisting of two alpha, two beta, two gamma and two delta subunits.

It is found in the cell membrane. The catalysed reaction is (2E)-glutaconyl-CoA + Na(+)(in) + H(+) = (2E)-butenoyl-CoA + Na(+)(out) + CO2. The protein operates within amino-acid degradation; L-glutamate degradation via hydroxyglutarate pathway; crotonoyl-CoA from L-glutamate: step 5/5. Its function is as follows. Part of the primary sodium pump glutaconyl-CoA decarboxylase (GCD). Possible membrane anchor for the alpha subunit. This Acidaminococcus fermentans (strain ATCC 25085 / DSM 20731 / CCUG 9996 / CIP 106432 / VR4) protein is Glutaconyl-CoA decarboxylase subunit delta (gcdD).